A 667-amino-acid chain; its full sequence is DNA ligase (667 aa).

Residues 34 to 38 (DSEYD), 83 to 84 (SL), and Glu-112 each bind NAD(+). Lys-114 (N6-AMP-lysine intermediate) is an active-site residue. The NAD(+) site is built by Arg-135, Glu-169, Lys-285, and Lys-309. Zn(2+) is bound by residues Cys-403, Cys-406, Cys-421, and Cys-426. Residues 589–667 (ASDSYFAGKT…EARLISELKK (79 aa)) form the BRCT domain.

It belongs to the NAD-dependent DNA ligase family. LigA subfamily. The cofactor is Mg(2+). It depends on Mn(2+) as a cofactor.

The catalysed reaction is NAD(+) + (deoxyribonucleotide)n-3'-hydroxyl + 5'-phospho-(deoxyribonucleotide)m = (deoxyribonucleotide)n+m + AMP + beta-nicotinamide D-nucleotide.. DNA ligase that catalyzes the formation of phosphodiester linkages between 5'-phosphoryl and 3'-hydroxyl groups in double-stranded DNA using NAD as a coenzyme and as the energy source for the reaction. It is essential for DNA replication and repair of damaged DNA. This is DNA ligase from Bacillus licheniformis (strain ATCC 14580 / DSM 13 / JCM 2505 / CCUG 7422 / NBRC 12200 / NCIMB 9375 / NCTC 10341 / NRRL NRS-1264 / Gibson 46).